A 588-amino-acid polypeptide reads, in one-letter code: Protein gamma response 1 (588 aa).

2 coiled-coil regions span residues 64 to 104 (AACD…LGKT) and 164 to 281 (SEVK…KTVV). 3 stretches are compositionally biased toward basic and acidic residues: residues 377–389 (KHSE…DKVR), 465–484 (NVKR…KKDD), and 508–525 (TSKK…KAER). Disordered stretches follow at residues 377–398 (KHSE…SGNN) and 417–525 (PIVR…KAER).

Basal levels in mitotically dividing cells (meristems), and high levels in endoreduplicating cells (stipules, trichomes) (at protein level).

It localises to the nucleus. Its function is as follows. Seems to mediate cell cycle arrest before mitosis in response to DNA damage. Is probably also involved in the transition from mitosis to endoreduplication. The protein is Protein gamma response 1 (GR1) of Arabidopsis thaliana (Mouse-ear cress).